We begin with the raw amino-acid sequence, 119 residues long: Chymotrypsin inhibitor WCI (119 aa).

5 cysteine pairs are disulfide-bonded: cysteine 6-cysteine 55, cysteine 20-cysteine 44, cysteine 29-cysteine 87, cysteine 45-cysteine 105, and cysteine 57-cysteine 116.

It is found in the secreted. In terms of biological role, inhibits bovine, insect and wheat chymotrypsins. Inhibits bovine chymotrypsin with Ki of 0.6 nM. Does not inhibit human or wheat alpha-amylases, bovine pancreatic trypsin, or trypsin-like activity isolated from wheat. The polypeptide is Chymotrypsin inhibitor WCI (Triticum aestivum (Wheat)).